A 126-amino-acid polypeptide reads, in one-letter code: Putative gene 48 protein (126 aa).

This Bacillus phage SP01 (Bacteriophage SP01) protein is Putative gene 48 protein (48).